We begin with the raw amino-acid sequence, 153 residues long: Vasotocin-neurophysin VT 1 (153 aa).

The first 20 residues, 1–20 (MPYSTFPLLWVLGLLALSSA), serve as a signal peptide directing secretion. C21 and C26 are disulfide-bonded. G29 is subject to Glycine amide. 7 disulfides stabilise this stretch: C41-C85, C44-C58, C52-C75, C59-C65, C92-C104, C98-C116, and C105-C110.

It belongs to the vasopressin/oxytocin family. Seven disulfide bonds are present in neurophysin.

The protein resides in the secreted. Vasotocin is an antidiuretic hormone. In Oncorhynchus keta (Chum salmon), this protein is Vasotocin-neurophysin VT 1.